The chain runs to 601 residues: Elongation factor 4 (601 aa).

The tr-type G domain maps to 5 to 187 (SNIRNFAIIA…AIVTKLPSPN (183 aa)). GTP is bound by residues 17 to 22 (DHGKST) and 134 to 137 (NKID).

The protein belongs to the TRAFAC class translation factor GTPase superfamily. Classic translation factor GTPase family. LepA subfamily.

The protein resides in the cell inner membrane. It carries out the reaction GTP + H2O = GDP + phosphate + H(+). Its function is as follows. Required for accurate and efficient protein synthesis under certain stress conditions. May act as a fidelity factor of the translation reaction, by catalyzing a one-codon backward translocation of tRNAs on improperly translocated ribosomes. Back-translocation proceeds from a post-translocation (POST) complex to a pre-translocation (PRE) complex, thus giving elongation factor G a second chance to translocate the tRNAs correctly. Binds to ribosomes in a GTP-dependent manner. The protein is Elongation factor 4 of Orientia tsutsugamushi (strain Ikeda) (Rickettsia tsutsugamushi).